Here is a 399-residue protein sequence, read N- to C-terminus: La protein 2 (399 aa).

Residues 3-106 (SSFNEETAKK…GRGTKLSKPE (104 aa)) enclose the HTH La-type RNA-binding domain. The RRM domain maps to 115 to 192 (RTLAASPFEY…ADLVLIPKSD (78 aa)). The xRRM domain occupies 269–399 (SLCKDNTDQL…QPTKKARKEP (131 aa)). The segment at 367 to 399 (AELEGGKEGHKKEKGKDECFENVQPTKKARKEP) is disordered. Residues 370-385 (EGGKEGHKKEKGKDEC) show a composition bias toward basic and acidic residues.

Expressed ubiquitously (at protein level).

The protein resides in the nucleus. The protein localises to the nucleoplasm. It is found in the nucleolus. Binds to the 3' poly(U) terminus of nascent RNA polymerase III transcripts, protecting them from exonuclease digestion and facilitating their folding and maturation. The protein is La protein 2 (LA2) of Arabidopsis thaliana (Mouse-ear cress).